A 326-amino-acid polypeptide reads, in one-letter code: Fructose operon regulatory protein (326 aa).

The HTH lacI-type domain occupies 1 to 58 (MTLDEIAKLAGVSKTTASYVINGKAQKYRISEKTQHKVMAVVEQYNFRPDHAASALRA). A DNA-binding region (H-T-H motif) is located at residues 3–22 (LDEIAKLAGVSKTTASYVIN).

In terms of assembly, homodimer.

With respect to regulation, interaction with F1P may induce a structural change in the DNA spacer region between the -35 and -10 elements, thereby facilitating RNAP binding to the promoter to trigger the transcriptional activation of the fru operon. Interaction with F1P does not release FruR from its binding sequence. Its function is as follows. Regulates the expression of the fruBKA (fru) operon, which encodes proteins involved in the import and metabolism of fructose. In the absence of fructose 1-phosphate (F1P), binds to the promoter region of fruB, interferes with the binding of the RNA polymerase (RNAP) to the promoter and represses the expression of the operon. In the presence of F1P, activates the transcription of the fru operon by facilitating the binding of RNAP to the promoter. Essential for the expression of the fru operon and thus for growth on fructose. In Vibrio cholerae serotype O1 (strain ATCC 39315 / El Tor Inaba N16961), this protein is Fructose operon regulatory protein.